The chain runs to 582 residues: Membrane-bound O-acyltransferase GUP1 (582 aa).

Over 1–61 (MVIPRYHLIP…IIKQANPKSR (61 aa)) the chain is Extracellular. The helical transmembrane segment at 62–82 (WSTIEFKFYYLVFLIIVPLMF) threads the bilayer. Over 83–121 (KAGMESANENNPNYPKYEHLLSNGWIFGRKVDNSDQQYR) the chain is Cytoplasmic. Residues 122 to 144 (FFRNNFPLLCLLIIIHVGLRRVI) traverse the membrane as a helical segment. Residues 145–158 (NRIIPLSSKRTYFD) are Extracellular-facing. Residues 159-179 (FIFGIIFLIGAHGVNVLKLSI) traverse the membrane as a helical segment. Over 180–195 (HLLINYLIGKYIKNYK) the chain is Cytoplasmic. The chain crosses the membrane as a helical span at residues 196-216 (LSLWITWIYGISSLFFNEWYG). The Extracellular segment spans residues 217–294 (NYTLGLSFLS…TAPLPIEDYN (78 aa)). Residues 295-315 (IFNYISYLTYTPLFIAGPILT) form a helical membrane-spanning segment. Over 316–343 (FNDYIYQSNYQQSSSTKDYHRIMMYLIR) the chain is Cytoplasmic. A helical membrane pass occupies residues 344–364 (FIFCLLTLEFILHFMYVVAAS). Residues 365-373 (KTKSWEGNL) lie on the Extracellular side of the membrane. Residues 374 to 394 (PFQISMLGMFNLNIIWLKLLI) traverse the membrane as a helical segment. Residues 395-454 (PWRLFRLWSLLDGIDPPENMIRCMDNNFSALAFWRAWHRSYNRWIIRYIYLPMGGGGKYR) lie on the Cytoplasmic side of the membrane. 2 helical membrane-spanning segments follow: residues 455 to 475 (ILNS…ELKL) and 476 to 496 (LMWG…TMIF). Residue His469 is part of the active site. The Cytoplasmic segment spans residues 497–507 (KKYRNQWWYRH). A helical transmembrane segment spans residues 508 to 528 (LCGVGAVINIWMMMIANLVGF). At 529 to 548 (CLGTDGMWKLLHDLFKTFDG) the chain is on the extracellular side. The helical transmembrane segment at 549–569 (VRFLIISSGALFVGAQIMFEI) threads the bilayer. The Cytoplasmic portion of the chain corresponds to 570 to 582 (RESEMRKGINVRC).

It belongs to the membrane-bound acyltransferase family.

The protein localises to the cell membrane. It is found in the endoplasmic reticulum membrane. Its subcellular location is the mitochondrion membrane. Membrane-bound O-acyltransferase involved in the remodeling of glycosylphosphatidylinositol (GPI) anchors. Acts only on GPI-anchored proteins, but not on free GPI lipids. Also involved in lipid metabolism, having profound effects on sphingolipid-sterol-ordered domains integrity and assembly. Involved in cell integrity and apoptosis. The polypeptide is Membrane-bound O-acyltransferase GUP1 (GUP1) (Candida tropicalis (Yeast)).